A 469-amino-acid chain; its full sequence is ATP synthase subunit beta (469 aa).

155-162 is an ATP binding site; the sequence is GGAGVGKT.

This sequence belongs to the ATPase alpha/beta chains family. In terms of assembly, F-type ATPases have 2 components, CF(1) - the catalytic core - and CF(0) - the membrane proton channel. CF(1) has five subunits: alpha(3), beta(3), gamma(1), delta(1), epsilon(1). CF(0) has three main subunits: a(1), b(2) and c(9-12). The alpha and beta chains form an alternating ring which encloses part of the gamma chain. CF(1) is attached to CF(0) by a central stalk formed by the gamma and epsilon chains, while a peripheral stalk is formed by the delta and b chains.

The protein localises to the cell inner membrane. It catalyses the reaction ATP + H2O + 4 H(+)(in) = ADP + phosphate + 5 H(+)(out). In terms of biological role, produces ATP from ADP in the presence of a proton gradient across the membrane. The catalytic sites are hosted primarily by the beta subunits. This is ATP synthase subunit beta from Helicobacter pylori (strain P12).